A 66-amino-acid polypeptide reads, in one-letter code: Large ribosomal subunit protein bL33c (66 aa).

The protein belongs to the bacterial ribosomal protein bL33 family.

Its subcellular location is the plastid. The protein localises to the chloroplast. In Oenothera argillicola (Appalachian evening primrose), this protein is Large ribosomal subunit protein bL33c.